A 206-amino-acid polypeptide reads, in one-letter code: Large ribosomal subunit protein uL4 (206 aa).

Residues 49–79 (KVKTRSEISRTTKKMYKQKGTGNARHGAASA) are disordered.

This sequence belongs to the universal ribosomal protein uL4 family. As to quaternary structure, part of the 50S ribosomal subunit.

Its function is as follows. One of the primary rRNA binding proteins, this protein initially binds near the 5'-end of the 23S rRNA. It is important during the early stages of 50S assembly. It makes multiple contacts with different domains of the 23S rRNA in the assembled 50S subunit and ribosome. Forms part of the polypeptide exit tunnel. The sequence is that of Large ribosomal subunit protein uL4 from Methylobacterium sp. (strain 4-46).